Consider the following 373-residue polypeptide: L-threonine 3-dehydrogenase, mitochondrial (373 aa).

NAD(+) is bound by residues 62 to 67 (GGLGQL), 88 to 90 (DIR), 106 to 107 (DI), tyrosine 195, lysine 199, and isoleucine 225. The active-site Proton donor/acceptor is tyrosine 195.

Belongs to the NAD(P)-dependent epimerase/dehydratase family. Homodimer.

Its subcellular location is the mitochondrion. The catalysed reaction is L-threonine + NAD(+) = (2S)-2-amino-3-oxobutanoate + NADH + H(+). It participates in amino-acid degradation; L-threonine degradation via oxydo-reductase pathway; glycine from L-threonine: step 1/2. Functionally, catalyzes the NAD(+)-dependent oxidation of L-threonine to 2-amino-3-ketobutyrate, mediating L-threonine catabolism. The polypeptide is L-threonine 3-dehydrogenase, mitochondrial (Sus scrofa (Pig)).